Reading from the N-terminus, the 398-residue chain is Dual-specificity RNA methyltransferase RlmN (398 aa).

The Proton acceptor role is filled by glutamate 119. A Radical SAM core domain is found at 125–364 (EADRATLCVS…TIVRKTRGDD (240 aa)). Cysteine 132 and cysteine 369 form a disulfide bridge. [4Fe-4S] cluster contacts are provided by cysteine 139, cysteine 143, and cysteine 146. S-adenosyl-L-methionine is bound by residues 193 to 194 (GE), serine 225, 247 to 249 (SLH), and asparagine 326. Catalysis depends on cysteine 369, which acts as the S-methylcysteine intermediate.

It belongs to the radical SAM superfamily. RlmN family. [4Fe-4S] cluster serves as cofactor.

The protein localises to the cytoplasm. It catalyses the reaction adenosine(2503) in 23S rRNA + 2 reduced [2Fe-2S]-[ferredoxin] + 2 S-adenosyl-L-methionine = 2-methyladenosine(2503) in 23S rRNA + 5'-deoxyadenosine + L-methionine + 2 oxidized [2Fe-2S]-[ferredoxin] + S-adenosyl-L-homocysteine. It carries out the reaction adenosine(37) in tRNA + 2 reduced [2Fe-2S]-[ferredoxin] + 2 S-adenosyl-L-methionine = 2-methyladenosine(37) in tRNA + 5'-deoxyadenosine + L-methionine + 2 oxidized [2Fe-2S]-[ferredoxin] + S-adenosyl-L-homocysteine. Functionally, specifically methylates position 2 of adenine 2503 in 23S rRNA and position 2 of adenine 37 in tRNAs. m2A2503 modification seems to play a crucial role in the proofreading step occurring at the peptidyl transferase center and thus would serve to optimize ribosomal fidelity. The sequence is that of Dual-specificity RNA methyltransferase RlmN from Yersinia pseudotuberculosis serotype IB (strain PB1/+).